The chain runs to 496 residues: Probable G-protein coupled receptor K01A12.3 (496 aa).

Residues 1–19 (MESVTRHRADMISFFTFDS) are Extracellular-facing. Residues 20 to 40 (YISIVGVAYTAVGLLGVFCNV) form a helical membrane-spanning segment. Over 41–58 (TTVIMILTNRVFRLSAYT) the chain is Cytoplasmic. A helical membrane pass occupies residues 59-79 (IMANVALADSIVMLIAGVACG). At 80 to 128 (MDVMWPNPNDLTSFIPSLEEPYQKIAPVSLRNDSKTDSSAAGFETGNIH) the chain is on the extracellular side. N-linked (GlcNAc...) asparagine glycosylation is present at N111. A helical membrane pass occupies residues 129-149 (AVLSFSFVAAWTAGVISYAML). Topologically, residues 150–169 (GTNRCIAICYYGTKARALNQ) are cytoplasmic. Residues 170-190 (VSVAVACSASTWIVGIAAALV) traverse the membrane as a helical segment. Residues 191–216 (GTLSQPMIGIQRTMWSISFLEPRPHT) lie on the Extracellular side of the membrane. Residues 217 to 237 (TLFFTLLCAANLLGLGAQWVC) traverse the membrane as a helical segment. The Cytoplasmic segment spans residues 238–285 (STLVLLKIRQVKKKISKNKLNQNSANRFRKQVILALNEIIVTGNFKAR). Residues 286-306 (LTFQFFYPSILCTISTFLFFI) traverse the membrane as a helical segment. Topologically, residues 307–318 (KPYAFEYLSGWQ) are extracellular. Residues 319–339 (LVILHLLWLCNHTCNPFIYAY) traverse the membrane as a helical segment. The Cytoplasmic segment spans residues 340–496 (FNDRMRLTYK…WVKFAKKASI (157 aa)). Positions 451-470 (TKELESAHNQGGSSRFDSER) are disordered.

Belongs to the G-protein coupled receptor 1 family.

Its subcellular location is the cell membrane. The polypeptide is Probable G-protein coupled receptor K01A12.3 (Caenorhabditis elegans).